The primary structure comprises 267 residues: Glutamate 5-kinase (267 aa).

Lys-15 is an ATP binding site. Residues Ser-55, Asp-142, and Asn-158 each coordinate substrate. ATP-binding positions include Ser-178–Asp-179 and Thr-220–Lys-226.

The protein belongs to the glutamate 5-kinase family.

The protein localises to the cytoplasm. The enzyme catalyses L-glutamate + ATP = L-glutamyl 5-phosphate + ADP. It functions in the pathway amino-acid biosynthesis; L-proline biosynthesis; L-glutamate 5-semialdehyde from L-glutamate: step 1/2. Its function is as follows. Catalyzes the transfer of a phosphate group to glutamate to form L-glutamate 5-phosphate. This is Glutamate 5-kinase from Ligilactobacillus salivarius (strain UCC118) (Lactobacillus salivarius).